A 644-amino-acid polypeptide reads, in one-letter code: Cell pattern formation-associated protein StuA (644 aa).

Low complexity predominate over residues 18-33 (ATAHAPASAAPSGISH). Disordered regions lie at residues 18–58 (ATAH…PGYP) and 86–120 (QLPAMSSSGPSPSLSGAQSYAPHSFDHTGQVAPPG). A compositionally biased stretch (polar residues) spans 38–47 (PQSSMMQPGQ). Over residues 87–104 (LPAMSSSGPSPSLSGAQS) the composition is skewed to low complexity. The region spanning 124–230 (RVTATLWEDE…HDIGALLYHP (107 aa)) is the HTH APSES-type domain. Residues 158–179 (GTKLLNVAGMTRGRRDGILKSE) constitute a DNA-binding region (H-T-H motif). The segment at 239–644 (GSAAMAAVDR…HTMTAQRARR (406 aa)) is disordered. The segment covering 253 to 269 (SMQTQRYISGPTTSQPP) has biased composition (polar residues). Residues 315-328 (SASSIMGMSNSGSS) are compositionally biased toward low complexity. Composition is skewed to polar residues over residues 334–357 (ANVQTPQGSQPLSIDTGLSNTRSV), 371–383 (QAISYGSNQSYDN), and 395–404 (PGQYNTQGQS). Basic and acidic residues predominate over residues 456 to 465 (EGDHEHDNEY). Low complexity predominate over residues 509–524 (GSGRATPRTTTTSQTQ). Positions 525–544 (WNSGYPTPQRQGPPSSNLYN) are enriched in polar residues. The interval 584-612 (KRGRDDDDEDPYRPDSVQSDDMGGLKRRK) is nuclear localization domain. Positions 635-644 (HTMTAQRARR) are enriched in polar residues.

The protein belongs to the EFG1/PHD1/stuA family.

Its subcellular location is the nucleus. Functionally, transcription factor that regulates asexual reproduction. Binds the StuA-response elements (StRE) with the consensus sequence 5'-(A/T)CGCG(T/A)N(A/C)-3' at the promoters of target genes. Required for pathogenicity and positively regulates the synthesis of the mycotoxin alternariol. Acts as a positive regulator of Tox3 but is not required for the expression of ToxA. Also acts as a central regulator of carbon metabolism including glycolysis, the TCA cycle, and amino acid synthesis. The protein is Cell pattern formation-associated protein StuA of Phaeosphaeria nodorum (strain SN15 / ATCC MYA-4574 / FGSC 10173) (Glume blotch fungus).